We begin with the raw amino-acid sequence, 168 residues long: Urease accessory protein UreE (168 aa).

Residues 137–168 (PESGAYHGTTGHGGGHSHSHGHSHDHHHDHSH) are disordered. Over residues 151–161 (GHSHSHGHSHD) the composition is skewed to basic residues.

It belongs to the UreE family.

The protein resides in the cytoplasm. In terms of biological role, involved in urease metallocenter assembly. Binds nickel. Probably functions as a nickel donor during metallocenter assembly. The chain is Urease accessory protein UreE from Saccharophagus degradans (strain 2-40 / ATCC 43961 / DSM 17024).